A 583-amino-acid chain; its full sequence is Glucosidase 2 subunit beta (583 aa).

Residues M1–A26 form the signal peptide. Residues C91 and C115 are joined by a disulfide bond. Residues N130–K252 are a coiled coil. The region spanning N455 to P562 is the MRH domain. 3 cysteine pairs are disulfide-bonded: C457–C470, C519–C548, and C533–C560. Residues K580–L583 carry the Prevents secretion from ER motif.

As to quaternary structure, heterodimer of a catalytic subunit alpha and a subunit beta.

Its subcellular location is the endoplasmic reticulum. Its function is as follows. Subunit of glucosidase 2, which cleaves sequentially the 2 innermost alpha-1,3-linked glucose residues from the Glc(2)Man(9)GlcNAc(2) oligosaccharide precursor of immature glycoproteins in the endoplasmic reticulum (ER). Specifically required for the cleavage of the final glucose. The subunit beta retains the catalytic subunit alpha in the ER. This chain is Glucosidase 2 subunit beta, found in Mycosarcoma maydis (Corn smut fungus).